A 184-amino-acid chain; its full sequence is Ribosome-recycling factor (184 aa).

Residues 141-161 form a disordered region; it reads KKNDKAISEDDQRKGQDDVQK.

The protein belongs to the RRF family.

The protein localises to the cytoplasm. Its function is as follows. Responsible for the release of ribosomes from messenger RNA at the termination of protein biosynthesis. May increase the efficiency of translation by recycling ribosomes from one round of translation to another. The protein is Ribosome-recycling factor of Solidesulfovibrio magneticus (strain ATCC 700980 / DSM 13731 / RS-1) (Desulfovibrio magneticus).